The primary structure comprises 73 residues: Conotoxin Asp7/Gla(3)-TxVI (73 aa).

Positions 1–19 (MQKLIILLLVAAVLMSTQA) are cleaved as a signal peptide. Residues 20–44 (VLQEKRPKEKIKFLSKRKTDAEKQQ) constitute a propeptide that is removed on maturation. Cystine bridges form between Cys48-Cys62, Cys55-Cys66, and Cys61-Cys71. Pro49 and Pro54 each carry 4-hydroxyproline. A 4-carboxyglutamate modification is found at Glu60. Position 64 is a 6'-bromotryptophan (Trp64).

As to expression, expressed by the venom duct.

It localises to the secreted. This Conus textile (Cloth-of-gold cone) protein is Conotoxin Asp7/Gla(3)-TxVI.